Reading from the N-terminus, the 527-residue chain is Phosphoenolpyruvate carboxykinase (ATP) (527 aa).

Substrate contacts are provided by arginine 54, tyrosine 190, and lysine 196. Residues lysine 196, histidine 215, and 231 to 239 (GLSGTGKTT) contribute to the ATP site. Mn(2+) contacts are provided by lysine 196 and histidine 215. Aspartate 252 serves as a coordination point for Mn(2+). ATP contacts are provided by residues glutamate 280, arginine 317, 436–437 (RI), and threonine 442. Position 317 (arginine 317) interacts with substrate.

This sequence belongs to the phosphoenolpyruvate carboxykinase (ATP) family. The cofactor is Mn(2+).

It localises to the cytoplasm. The enzyme catalyses oxaloacetate + ATP = phosphoenolpyruvate + ADP + CO2. It participates in carbohydrate biosynthesis; gluconeogenesis. In terms of biological role, involved in the gluconeogenesis. Catalyzes the conversion of oxaloacetate (OAA) to phosphoenolpyruvate (PEP) through direct phosphoryl transfer between the nucleoside triphosphate and OAA. This chain is Phosphoenolpyruvate carboxykinase (ATP), found in Oceanobacillus iheyensis (strain DSM 14371 / CIP 107618 / JCM 11309 / KCTC 3954 / HTE831).